A 258-amino-acid polypeptide reads, in one-letter code: HVA22-like protein j (258 aa).

Residues 153 to 258 form a disordered region; sequence AANQPPTERN…RSNSRTQPAA (106 aa). Residues 156–169 are compositionally biased toward polar residues; the sequence is QPPTERNVNMNAQS. The span at 206–215 shows a compositional bias: pro residues; the sequence is WPPPTPPPTP.

This sequence belongs to the DP1 family.

The sequence is that of HVA22-like protein j (HVA22J) from Arabidopsis thaliana (Mouse-ear cress).